The following is a 158-amino-acid chain: 6,7-dimethyl-8-ribityllumazine synthase (158 aa).

5-amino-6-(D-ribitylamino)uracil contacts are provided by residues F24, 58–60 (AFE), and 82–84 (AVI). 87-88 (GT) lines the (2S)-2-hydroxy-3-oxobutyl phosphate pocket. H90 functions as the Proton donor in the catalytic mechanism. F115 serves as a coordination point for 5-amino-6-(D-ribitylamino)uracil. Residue R129 coordinates (2S)-2-hydroxy-3-oxobutyl phosphate.

It belongs to the DMRL synthase family. In terms of assembly, forms an icosahedral capsid composed of 60 subunits, arranged as a dodecamer of pentamers.

The catalysed reaction is (2S)-2-hydroxy-3-oxobutyl phosphate + 5-amino-6-(D-ribitylamino)uracil = 6,7-dimethyl-8-(1-D-ribityl)lumazine + phosphate + 2 H2O + H(+). It functions in the pathway cofactor biosynthesis; riboflavin biosynthesis; riboflavin from 2-hydroxy-3-oxobutyl phosphate and 5-amino-6-(D-ribitylamino)uracil: step 1/2. Catalyzes the formation of 6,7-dimethyl-8-ribityllumazine by condensation of 5-amino-6-(D-ribitylamino)uracil with 3,4-dihydroxy-2-butanone 4-phosphate. This is the penultimate step in the biosynthesis of riboflavin. The protein is 6,7-dimethyl-8-ribityllumazine synthase of Pseudomonas putida (strain GB-1).